Consider the following 239-residue polypeptide: Large ribosomal subunit protein uL3 (239 aa).

Disordered regions lie at residues 140-166 (SHRS…PGHM) and 211-239 (PLPK…QEGA). At Gln-151 the chain carries N5-methylglutamine.

It belongs to the universal ribosomal protein uL3 family. As to quaternary structure, part of the 50S ribosomal subunit. Forms a cluster with proteins L14 and L19. Methylated by PrmB.

One of the primary rRNA binding proteins, it binds directly near the 3'-end of the 23S rRNA, where it nucleates assembly of the 50S subunit. The polypeptide is Large ribosomal subunit protein uL3 (Bradyrhizobium sp. (strain BTAi1 / ATCC BAA-1182)).